The primary structure comprises 329 residues: Phosphoenolpyruvate transferase (329 aa).

Asp-61 is a 7,8-didemethyl-8-hydroxy-5-deazariboflavin binding site.

This sequence belongs to the CofD family. As to quaternary structure, homodimer. It depends on Mg(2+) as a cofactor.

The catalysed reaction is enolpyruvoyl-2-diphospho-5'-guanosine + 7,8-didemethyl-8-hydroxy-5-deazariboflavin = dehydro coenzyme F420-0 + GMP + H(+). It functions in the pathway cofactor biosynthesis; coenzyme F420 biosynthesis. Functionally, catalyzes the transfer of the phosphoenolpyruvate moiety from enoylpyruvoyl-2-diphospho-5'-guanosine (EPPG) to 7,8-didemethyl-8-hydroxy-5-deazariboflavin (FO) with the formation of dehydro coenzyme F420-0 and GMP. The polypeptide is Phosphoenolpyruvate transferase (Mycobacterium ulcerans (strain Agy99)).